Reading from the N-terminus, the 302-residue chain is Sulfate adenylyltransferase subunit 2 (302 aa).

The segment at 280-302 (RQGRAIDHDQSGSMELKKRQGYF) is disordered.

This sequence belongs to the PAPS reductase family. CysD subfamily. As to quaternary structure, heterodimer composed of CysD, the smaller subunit, and CysN.

The catalysed reaction is sulfate + ATP + H(+) = adenosine 5'-phosphosulfate + diphosphate. It functions in the pathway sulfur metabolism; hydrogen sulfide biosynthesis; sulfite from sulfate: step 1/3. Functionally, with CysN forms the ATP sulfurylase (ATPS) that catalyzes the adenylation of sulfate producing adenosine 5'-phosphosulfate (APS) and diphosphate, the first enzymatic step in sulfur assimilation pathway. APS synthesis involves the formation of a high-energy phosphoric-sulfuric acid anhydride bond driven by GTP hydrolysis by CysN coupled to ATP hydrolysis by CysD. This chain is Sulfate adenylyltransferase subunit 2, found in Vibrio cholerae serotype O1 (strain ATCC 39541 / Classical Ogawa 395 / O395).